The sequence spans 286 residues: MGSLSSLAAAAVFLSLLAVGHCAAADFNATDADADFAGNGVDFNSSDAAVYWGPWTKARATWYGQPNGAGPDDNGGACGFKHTNQYPFMSMTSCGNQPLFKDGKGCGSCYKIRCTKDQSCSGRSETVIITDMNYYPVAPFHFDLSGTAFGRLAKPGLNDKLRHSGIIDIEFTRVPCEFPGLKIGFHVEEYSNPVYFAVLVEYEDGDGDVVQVDLMESKTAHGPPTGRWTPMRESWGSIWRLDTNHRLQAPFSIRIRNESGKTLVANNVIPANWRPNTFYRSFVQYS.

An N-terminal signal peptide occupies residues 1–24 (MGSLSSLAAAAVFLSLLAVGHCAA). Residues N28 and N44 are each glycosylated (N-linked (GlcNAc...) asparagine). Residues 75–181 (GGACGFKHTN…TRVPCEFPGL (107 aa)) enclose the Expansin-like EG45 domain. 3 cysteine pairs are disulfide-bonded: C78–C106, C109–C176, and C114–C120. An Expansin-like CBD domain is found at 194-281 (VYFAVLVEYE…NWRPNTFYRS (88 aa)). N257 carries N-linked (GlcNAc...) asparagine glycosylation.

This sequence belongs to the expansin family. Expansin B subfamily. As to expression, expressed in internodes.

The protein resides in the secreted. It is found in the cell wall. The protein localises to the membrane. In terms of biological role, may cause loosening and extension of plant cell walls by disrupting non-covalent bonding between cellulose microfibrils and matrix glucans. No enzymatic activity has been found. May be required for rapid internodal elongation in deepwater rice during submergence. The polypeptide is Expansin-B4 (EXPB4) (Oryza sativa subsp. japonica (Rice)).